The following is a 121-amino-acid chain: Chorion class CA protein ERA.4 (121 aa).

The signal sequence occupies residues methionine 1 to serine 23. Positions glutamine 24–glycine 57 are left arm. Positions glycine 58 to isoleucine 105 are central domain. The segment at serine 106–tyrosine 121 is right arm.

It belongs to the chorion protein family.

This protein is one of many from the eggshell of the silk moth. The sequence is that of Chorion class CA protein ERA.4 (ERA.4) from Bombyx mori (Silk moth).